The primary structure comprises 470 residues: Uronate isomerase (470 aa).

This sequence belongs to the metallo-dependent hydrolases superfamily. Uronate isomerase family.

It carries out the reaction D-glucuronate = D-fructuronate. The enzyme catalyses aldehydo-D-galacturonate = keto-D-tagaturonate. It functions in the pathway carbohydrate metabolism; pentose and glucuronate interconversion. The sequence is that of Uronate isomerase from Shigella boydii serotype 18 (strain CDC 3083-94 / BS512).